An 88-amino-acid chain; its full sequence is Cell division topological specificity factor (88 aa).

This sequence belongs to the MinE family.

In terms of biological role, prevents the cell division inhibition by proteins MinC and MinD at internal division sites while permitting inhibition at polar sites. This ensures cell division at the proper site by restricting the formation of a division septum at the midpoint of the long axis of the cell. The sequence is that of Cell division topological specificity factor from Aeromonas hydrophila subsp. hydrophila (strain ATCC 7966 / DSM 30187 / BCRC 13018 / CCUG 14551 / JCM 1027 / KCTC 2358 / NCIMB 9240 / NCTC 8049).